A 392-amino-acid chain; its full sequence is Stilbene synthase 6 (392 aa).

A substrate-binding site is contributed by 55–58; it reads KFNR. Residue Cys-164 is part of the active site. Residues Leu-267 and 305-307 each bind substrate; that span reads GGP.

It belongs to the thiolase-like superfamily. Chalcone/stilbene synthases family. As to quaternary structure, homodimer.

Its subcellular location is the cytoplasm. It catalyses the reaction 4-coumaroyl-CoA + 3 malonyl-CoA + 3 H(+) = trans-resveratrol + 4 CO2 + 4 CoA. It functions in the pathway phytoalexin biosynthesis; 3,4',5-trihydroxystilbene biosynthesis; 3,4',5-trihydroxystilbene from trans-4-coumarate: step 2/2. Mediates resistance to pathogens which are sensitive to stilbenes. The chain is Stilbene synthase 6 (STS) from Vitis vinifera (Grape).